Reading from the N-terminus, the 130-residue chain is Putative antitoxin VapB50 (130 aa).

In terms of biological role, possibly the antitoxin component of a type II toxin-antitoxin (TA) system. Its cognate toxin is VapC50. In Mycobacterium tuberculosis (strain ATCC 25618 / H37Rv), this protein is Putative antitoxin VapB50.